A 353-amino-acid chain; its full sequence is N-formyl peptide receptor 3 (353 aa).

The Extracellular segment spans residues 1–27 (METNFSIPLNETEEVLPEPAGHTVLWI). 2 N-linked (GlcNAc...) asparagine glycosylation sites follow: Asn4 and Asn10. A helical membrane pass occupies residues 28–50 (FSLLVHGVTFVFGVLGNGLVIWV). Residues 51 to 61 (AGFRMTRTVNT) lie on the Cytoplasmic side of the membrane. A helical transmembrane segment spans residues 62-83 (ICYLNLALADFSFSAILPFRMV). The Extracellular portion of the chain corresponds to 84-100 (SVAMREKWPFGSFLCKL). Cys98 and Cys176 are disulfide-bonded. The chain crosses the membrane as a helical span at residues 101 to 121 (VHVMIDINLFVSVYLITIIAL). The Cytoplasmic portion of the chain corresponds to 122 to 140 (DRCICVLHPAWAQNHRTMS). Residues 141 to 162 (LAKRVMTGLWIFTIVLTLPNFI) form a helical membrane-spanning segment. Topologically, residues 163 to 205 (FWTTISTTNGDTYCIFNFAFWGDTAVERLNVFITMAKVFLILH) are extracellular. A helical membrane pass occupies residues 206–226 (FIIGFSVPMSIITVCYGIIAA). Residues 227–242 (KIHRNHMIKSSRPLRV) lie on the Cytoplasmic side of the membrane. Residues 243–266 (FAAVVASFFICWFPYELIGILMAV) traverse the membrane as a helical segment. At 267–286 (WLKEMLLNGKYKIILVLINP) the chain is on the extracellular side. A helical membrane pass occupies residues 287-306 (TSSLAFFNSCLNPILYVFMG). Over 307-353 (RNFQERLIRSLPTSLERALTEVPDSAQTSNTDTTSASPPEETELQAM) the chain is Cytoplasmic. The disordered stretch occupies residues 327–353 (EVPDSAQTSNTDTTSASPPEETELQAM). Residues 331–343 (SAQTSNTDTTSAS) are compositionally biased toward polar residues.

The protein belongs to the G-protein coupled receptor 1 family. In terms of tissue distribution, detected in various tissues with highest expression in lung.

Its subcellular location is the cell membrane. Functionally, low affinity receptor for N-formyl-methionyl peptides, which are powerful neutrophils chemotactic factors. Binding of FMLP to the receptor causes activation of neutrophils. This response is mediated via a G-protein that activates a phosphatidylinositol-calcium second messenger system. Acts as a receptor for humanin. This Homo sapiens (Human) protein is N-formyl peptide receptor 3 (FPR3).